A 221-amino-acid polypeptide reads, in one-letter code: Retinitis pigmentosa 9 protein (221 aa).

Basic and acidic residues-rich tracts occupy residues 1–10 (MSSRPGREDV), 17–29 (RPRE…LQRR), and 60–69 (IKEDETKPED). A disordered region spans residues 1–76 (MSSRPGREDV…PEDCIPDVPG (76 aa)). The tract at residues 1–155 (MSSRPGREDV…RDNKRHEKDV (155 aa)) is PIM1-binding. A CCHC-type zinc finger spans residues 104–122 (QCWRCKRYGHRTGDKECPF). Lys129 participates in a covalent cross-link: Glycyl lysine isopeptide (Lys-Gly) (interchain with G-Cter in SUMO2). Residues 147–156 (DNKRHEKDVR) are compositionally biased toward basic and acidic residues. The interval 147–221 (DNKRHEKDVR…SKSNEGSDSE (75 aa)) is disordered. The span at 184 to 212 (KHKKKKKKEKHKKRKKEKKKKKKRKHKSS) shows a compositional bias: basic residues. Phosphoserine; by PIM1 is present on residues Ser212 and Ser214.

Binds to PIM1. Binds to ZNHIT4. Appears to be expressed in a wide range of tissues.

Its subcellular location is the nucleus. Its function is as follows. Is thought to be a target protein for the PIM1 kinase. May play some roles in B-cell proliferation in association with PIM1. The sequence is that of Retinitis pigmentosa 9 protein (RP9) from Homo sapiens (Human).